Consider the following 589-residue polypeptide: MAVARGVGSPEPAPPQLYKWGGCGLGEPGSALERRGAAARGRCGRARAPRLPDSFPRGECPKPGARAPRSVRCGEPLPPASPPPARPQAQRARPRAPHSRRRAMLHLSEFSEPDALLVKSTEGCCAEPSAELPRLPARDAPAATGYPGAGDFLSWALNSCGASGDLADSCFLEGPAPTPPPGLSYSGSFFIQAVPEHPHDPEALFNLMSGILGLAPFPGPEAAASRSPLDAPFPAGSDALLPGPPDLYSPDLGAAPFPEAFWEASPCAGAPSQCLYEPQLSPPDVKPGLRAPPASPALDAVSAFKGPYAPWELLSVGAPGNCGSQGDYQAAPEARFPVIGTKIEDLLSISCPAELPAVPANRLYPSGAYDAFPLAPGDLGEGAEGLPGLLTPPSGEGGSSGDGGEFLASTQPQLSPLGLRSAAAADFPKPLVADIPGSSGVAAPPVPPPPPTPFPQAKARRKGRRGGKCSTRCFCPRPHAKAFACPVESCVRSFARSDELNRHLRIHTGHKPFQCRICLRNFSRSDHLTTHVRTHTGEKPFACDVCGRRFARSDEKKRHSKVHLKQKARAEERLKGLGFYSLGLSFASL.

3 disordered regions span residues 29–101 (GSAL…HSRR), 383–411 (AEGL…ASTQ), and 436–466 (PGSS…GRRG). Residues 76–86 (PLPPASPPPAR) are compositionally biased toward pro residues. A compositionally biased stretch (basic residues) spans 92-101 (ARPRAPHSRR). Residues 395–404 (GEGGSSGDGG) show a composition bias toward gly residues. Residues 444–454 (PPVPPPPPTPF) are compositionally biased toward pro residues. C2H2-type zinc fingers lie at residues 483 to 507 (FACP…LRIH), 513 to 535 (FQCR…VRTH), and 541 to 563 (FACD…SKVH).

This sequence belongs to the EGR C2H2-type zinc-finger protein family.

Its subcellular location is the nucleus. Functionally, transcriptional regulator. Recognizes and binds to the DNA sequence 5'-GCGGGGGCG-3' (GSG). Activates the transcription of target genes whose products are required for mitogenesis and differentiation. The protein is Early growth response protein 4 (EGR4) of Homo sapiens (Human).